Here is a 140-residue protein sequence, read N- to C-terminus: MPPKAAEKKPSTGGKAPAGKAPAEKKEAGKKTAAAASGEKKKRGKTRKETYSSYIYKVLKQVHPDTGISTRAMSILNSFVNDIFERVATEASKLAAYNKKSTISSREIQTSVRLILPGELAKHAVSEGTKAVTKYSSSAK.

Positions 1 to 10 (MPPKAAEKKP) are enriched in basic and acidic residues. The interval 1–48 (MPPKAAEKKPSTGGKAPAGKAPAEKKEAGKKTAAAASGEKKKRGKTRK) is disordered. N6-acetyllysine; alternate is present on residues K8 and K9. Residues K8 and K9 each participate in a glycyl lysine isopeptide (Lys-Gly) (interchain with G-Cter in SUMO); alternate cross-link. Residues 11–21 (STGGKAPAGKA) show a composition bias toward low complexity. K15 bears the N6-acetyllysine mark. K25 carries the post-translational modification N6-acetyllysine; alternate. K25 is covalently cross-linked (Glycyl lysine isopeptide (Lys-Gly) (interchain with G-Cter in SUMO); alternate). A Glycyl lysine isopeptide (Lys-Gly) (interchain with G-Cter in SUMO) cross-link involves residue K26. K134 participates in a covalent cross-link: Glycyl lysine isopeptide (Lys-Gly) (interchain with G-Cter in ubiquitin).

This sequence belongs to the histone H2B family. The nucleosome is a histone octamer containing two molecules each of H2A, H2B, H3 and H4 assembled in one H3-H4 heterotetramer and two H2A-H2B heterodimers. The octamer wraps approximately 147 bp of DNA. Monoubiquitinated by the ubc2-bre1 complex to form H2BK123ub1. H2BK123ub1 gives a specific tag for epigenetic transcriptional activation and is also prerequisite for H3K4me and H3K79me formation. H2BK123ub1 also modulates the formation of double-strand breaks during meiosis and is a prerequisite for DNA-damage checkpoint activation. Post-translationally, acetylated by gcn5 to form H2BK11ac and H2BK16ac. H2BK16ac can also be formed by esa1. Acetylation of N-terminal lysines and particularly formation of H2BK11acK16ac has a positive effect on transcription. In terms of processing, sumoylation to form H2BK6su or H2BK7su, and probably also H2BK16su or H2BK17su, occurs preferentially near the telomeres and represses gene transcription.

The protein resides in the nucleus. Its subcellular location is the chromosome. In terms of biological role, core component of nucleosome. Nucleosomes wrap and compact DNA into chromatin, limiting DNA accessibility to the cellular machineries which require DNA as a template. Histones thereby play a central role in transcription regulation, DNA repair, DNA replication and chromosomal stability. DNA accessibility is regulated via a complex set of post-translational modifications of histones, also called histone code, and nucleosome remodeling. This Emericella nidulans (strain FGSC A4 / ATCC 38163 / CBS 112.46 / NRRL 194 / M139) (Aspergillus nidulans) protein is Histone H2B (htbA).